The sequence spans 264 residues: Probable DNA polymerase sliding clamp 2 (264 aa).

Residues S75–D94 mediate DNA binding.

It belongs to the PCNA family.

Its function is as follows. Sliding clamp subunit. Responsible for tethering the catalytic subunit of DNA polymerase to DNA during high-speed replication. The sequence is that of Probable DNA polymerase sliding clamp 2 from Paramecium bursaria Chlorella virus 1 (PBCV-1).